Here is a 116-residue protein sequence, read N- to C-terminus: Venom nerve growth factor (116 aa).

Disulfide bonds link Cys-14-Cys-78, Cys-56-Cys-106, and Cys-66-Cys-108. Lys-86 is a binding site for a 1,2-diacyl-sn-glycerol.

Belongs to the NGF-beta family. In terms of assembly, homodimer; non-covalently linked. Interacts with NTRK1. Not glycosylated. In terms of tissue distribution, expressed by the venom gland.

It localises to the secreted. Functionally, nerve growth factor is important for the development and maintenance of the sympathetic and sensory nervous systems. It stimulates division and differentiation of sympathetic and embryonic sensory neurons as well as basal forebrain cholinergic neurons in the brain. Its relevance in the snake venom is not clear. However, it has been shown to inhibit metalloproteinase-dependent proteolysis of platelet glycoprotein Ib alpha, suggesting a metalloproteinase inhibition to prevent metalloprotease autodigestion and/or protection against prey proteases. Binds a lipid between the two protein chains in the homodimer. The lipid-bound form promotes histamine relase from mouse mast cells, contrary to the lipid-free form. The sequence is that of Venom nerve growth factor from Naja atra (Chinese cobra).